Here is a 412-residue protein sequence, read N- to C-terminus: uncharacterized protein (412 aa).

A Radical SAM core domain is found at 50–264 (EVDIRTAYIN…KSGRRIVIGD (215 aa)). [4Fe-4S] cluster contacts are provided by Cys64, Cys68, and Cys71.

It belongs to the radical SAM superfamily. Anaerobic sulfatase-maturating enzyme family. The cofactor is [4Fe-4S] cluster.

This is an uncharacterized protein from Archaeoglobus fulgidus (strain ATCC 49558 / DSM 4304 / JCM 9628 / NBRC 100126 / VC-16).